Reading from the N-terminus, the 194-residue chain is Probable proteasome subunit beta type-4 (194 aa).

This sequence belongs to the peptidase T1B family. As to quaternary structure, the 26S proteasome consists of a 20S proteasome core and two 19S regulatory subunits. The 20S proteasome core is composed of 28 subunits that are arranged in four stacked rings, resulting in a barrel-shaped structure. The two end rings are each formed by seven alpha subunits, and the two central rings are each formed by seven beta subunits. The catalytic chamber with the active sites is on the inside of the barrel.

Its subcellular location is the cytoplasm. It is found in the nucleus. Non-catalytic component of the proteasome, a multicatalytic proteinase complex which is characterized by its ability to cleave peptides with Arg, Phe, Tyr, Leu, and Glu adjacent to the leaving group at neutral or slightly basic pH. The proteasome has an ATP-dependent proteolytic activity. In Meyerozyma guilliermondii (strain ATCC 6260 / CBS 566 / DSM 6381 / JCM 1539 / NBRC 10279 / NRRL Y-324) (Yeast), this protein is Probable proteasome subunit beta type-4 (PRO2).